The following is a 55-amino-acid chain: Large ribosomal subunit protein bL33 (55 aa).

This sequence belongs to the bacterial ribosomal protein bL33 family.

The sequence is that of Large ribosomal subunit protein bL33 from Enterobacter sp. (strain 638).